Reading from the N-terminus, the 462-residue chain is GTPase Der (462 aa).

2 consecutive EngA-type G domains span residues 9-171 (KTIA…GLTK) and 201-372 (IQVG…ECFS). GTP-binding positions include 15-22 (GQPNVGKS), 62-66 (DTGGM), 123-126 (NKID), 207-214 (GRVNVGKS), 254-258 (DTAGI), and 318-321 (NKWD). The 85-residue stretch at 373–457 (KRIPTSLLNS…PLIINAKDKK (85 aa)) folds into the KH-like domain.

It belongs to the TRAFAC class TrmE-Era-EngA-EngB-Septin-like GTPase superfamily. EngA (Der) GTPase family. Associates with the 50S ribosomal subunit.

Its function is as follows. GTPase that plays an essential role in the late steps of ribosome biogenesis. This chain is GTPase Der, found in Helicobacter acinonychis (strain Sheeba).